We begin with the raw amino-acid sequence, 627 residues long: Mitochondrial distribution and morphology protein 34 (627 aa).

The 195-residue stretch at 1 to 195 (MAFNFNWSPL…LPAIIHRLSL (195 aa)) folds into the SMP-LTD domain. 4 disordered regions span residues 209 to 230 (SAQVTNPSLDGPGLDPLLNPPQ), 332 to 470 (ASLA…RTSP), 486 to 557 (LQRQ…SRPS), and 586 to 627 (RIQD…AYRH). Low complexity-rich tracts occupy residues 215–225 (PSLDGPGLDPL) and 332–341 (ASLASSSHSR). The segment covering 360-372 (RHSKAHARKRKKR) has biased composition (basic residues). The span at 373-384 (VVDLRRRPKSAD) shows a compositional bias: basic and acidic residues. Residues 390 to 412 (SGESAYTETSTTTSAVSVFSGST) show a composition bias toward low complexity. A compositionally biased stretch (basic and acidic residues) spans 436-451 (TLRDRIAARDDAERNS). The span at 528–557 (PNASNNYTSSSSPSARDPQQQQPQQLSRPS) shows a compositional bias: low complexity.

This sequence belongs to the MDM34 family. Component of the ER-mitochondria encounter structure (ERMES) or MDM complex, composed of MMM1, MDM10, MDM12 and MDM34.

It localises to the mitochondrion outer membrane. Its function is as follows. Component of the ERMES/MDM complex, which serves as a molecular tether to connect the endoplasmic reticulum (ER) and mitochondria. Components of this complex are involved in the control of mitochondrial shape and protein biogenesis, and function in nonvesicular lipid trafficking between the ER and mitochondria. MDM34 is required for the interaction of the ER-resident membrane protein MMM1 and the outer mitochondrial membrane-resident beta-barrel protein MDM10. This Blastomyces gilchristii (strain SLH14081) (Blastomyces dermatitidis) protein is Mitochondrial distribution and morphology protein 34.